The primary structure comprises 534 residues: 5'-nucleotidase domain-containing protein 3 (534 aa).

Residue Asp-104 is the Nucleophile of the active site. Residues Asp-104 and Asp-106 each coordinate Mg(2+). The Proton donor role is filled by Asp-106. Residue 234–242 (KEAIRDVHV) participates in substrate binding. Asp-372 contacts Mg(2+).

It belongs to the 5'(3')-deoxyribonucleotidase family. The cofactor is Mg(2+).

This Xenopus tropicalis (Western clawed frog) protein is 5'-nucleotidase domain-containing protein 3 (nt5dc3).